The chain runs to 102 residues: NADH-quinone oxidoreductase subunit K (102 aa).

A run of 3 helical transmembrane segments spans residues 6–26 (MEHG…GLLI), 30–50 (LLFI…AFVV), and 65–85 (ILVI…LLLL).

It belongs to the complex I subunit 4L family. As to quaternary structure, NDH-1 is composed of 14 different subunits. Subunits NuoA, H, J, K, L, M, N constitute the membrane sector of the complex.

The protein localises to the cell inner membrane. The catalysed reaction is a quinone + NADH + 5 H(+)(in) = a quinol + NAD(+) + 4 H(+)(out). Functionally, NDH-1 shuttles electrons from NADH, via FMN and iron-sulfur (Fe-S) centers, to quinones in the respiratory chain. The immediate electron acceptor for the enzyme in this species is believed to be ubiquinone. Couples the redox reaction to proton translocation (for every two electrons transferred, four hydrogen ions are translocated across the cytoplasmic membrane), and thus conserves the redox energy in a proton gradient. This Aeromonas hydrophila subsp. hydrophila (strain ATCC 7966 / DSM 30187 / BCRC 13018 / CCUG 14551 / JCM 1027 / KCTC 2358 / NCIMB 9240 / NCTC 8049) protein is NADH-quinone oxidoreductase subunit K.